Consider the following 502-residue polypeptide: Alpha-globin transcription factor CP2 (502 aa).

The region spanning 63-300 (EILPFQYVLC…SPGFNSSHSS (238 aa)) is the Grh/CP2 DB domain. The segment at 133–386 (EHQQLEGWRW…LFNALKGRMV (254 aa)) is DNA-binding. The span at 241–265 (KGADRKQKIDREKMEKRTPHEKEKY) shows a compositional bias: basic and acidic residues. Disordered regions lie at residues 241–268 (KGAD…YQPS) and 294–326 (FNSS…NLLP). At Ser-353 the chain carries Phosphoserine.

The protein belongs to the grh/CP2 family. CP2 subfamily. As to quaternary structure, binds to DNA as a dimer. Interacts with UBP1 and PIAS1, and is probably part of a complex containing TFCP2, UBP1 and PIAS1. Component of the SSP (stage selector protein) complex, which appears to be a heteromer of TFCP2 and 2 copies of NFE4.

It is found in the nucleus. In terms of biological role, binds a variety of cellular promoters including fibrinogen, alpha-globin promoters. Activation of the alpha-globin promoter in erythroid cells is via synergistic interaction with UBP1. Functions as part of the SSP (stage selector protein) complex. Facilitates the interaction of the gamma-globin genes with enhancer elements contained in the locus control region in fetal erythroid cells. Interacts by binding to the stage selector element (SSE) in the proximal gamma-globin promoter. The chain is Alpha-globin transcription factor CP2 (Tfcp2) from Mus musculus (Mouse).